A 236-amino-acid chain; its full sequence is Phosphoribosylaminoimidazole-succinocarboxamide synthase (236 aa).

This sequence belongs to the SAICAR synthetase family.

It carries out the reaction 5-amino-1-(5-phospho-D-ribosyl)imidazole-4-carboxylate + L-aspartate + ATP = (2S)-2-[5-amino-1-(5-phospho-beta-D-ribosyl)imidazole-4-carboxamido]succinate + ADP + phosphate + 2 H(+). Its pathway is purine metabolism; IMP biosynthesis via de novo pathway; 5-amino-1-(5-phospho-D-ribosyl)imidazole-4-carboxamide from 5-amino-1-(5-phospho-D-ribosyl)imidazole-4-carboxylate: step 1/2. The polypeptide is Phosphoribosylaminoimidazole-succinocarboxamide synthase (Campylobacter jejuni subsp. jejuni serotype O:2 (strain ATCC 700819 / NCTC 11168)).